Consider the following 532-residue polypeptide: MSAATPSVIRLPRDTSAQHAARPAFVGSDPLTYGEFTARVEAVAARLLSLGTRTGDRIAVWMDKQPRYAEAIVAALEAGCAYVPLDGGQPVSRVRTILADAEPVVLFTDAHHAALLGDDDLPASVTTVVAVGDALPDTVGGIPVAPWESWEQGRAGRVTLLPSLTPGDLAALLYTSGSTGTPKGVQISHGALANFVAWARDELDVGPDDVFAGHASFNFDLSTFDLFTALSCGAAVWIVPDAATKDVTALAEGIRRHRITVWYSVPSVLHLLTTSAALTPEHAASLRYVLFAGEVFPVPQLRALRELLPPGTPLYNLYGPTETNVCTYHRVRPEDLHRATPVPIGLPITGAGTTVVDDAGRTVREPGAIGELHVSGVCVTPGYWRRAEEPVSTAHCRGVHPTGDLVSYEEDGRLVYRGRKDRMVKLSGYRVELGEIEAAALRHPGIAEAAVLVDGSGPKARLRLYYTLCEGAERIGLVELKQHCARHLPTYMVPHGAVRLDRMPLNPNGKTDYRRLGLDAPPRPAAPLGTAR.

Residues 510 to 532 (KTDYRRLGLDAPPRPAAPLGTAR) form a disordered region.

The protein belongs to the ATP-dependent AMP-binding enzyme family.

The catalysed reaction is holo-[peptidyl-carrier protein] + L-proline + ATP = L-prolyl-[peptidyl-carrier protein] + AMP + diphosphate. Functionally, involved in the biosynthesis of undecylprodigiosin. Catalyzes the conversion of L-proline to L-prolyl-AMP and the transfer of the L-prolyl group to acyl carrier protein RedO. The protein is L-proline--[L-prolyl-carrier protein] ligase of Streptomyces coelicolor (strain ATCC BAA-471 / A3(2) / M145).